We begin with the raw amino-acid sequence, 970 residues long: Testis anion transporter 1 (970 aa).

Residues 1–95 (MAQLERSAIS…YRLKDWLLGD (95 aa)) lie on the Cytoplasmic side of the membrane. The chain crosses the membrane as a helical span at residues 96–116 (LLAGISVGLVQVPQGLTLSLL). The Extracellular segment spans residues 117–119 (ARQ). A helical membrane pass occupies residues 120–140 (LIPPLNIAYAAFCSSVIYVIF). The Cytoplasmic portion of the chain corresponds to 141–146 (GSCHQM). Residues 147–167 (SIGSFFLVSALLINVLKVSPF) traverse the membrane as a helical segment. The Extracellular segment spans residues 168-202 (NNGQLVMGSFVKNEFSAPSYLMGYNKSLSVVATTT). Residue Asn-192 is glycosylated (N-linked (GlcNAc...) asparagine). The chain crosses the membrane as a helical span at residues 203-223 (FLTGIIQLIMGVLGLGFIATY). The Cytoplasmic segment spans residues 224 to 232 (LPESAMSAY). The helical transmembrane segment at 233-253 (LAAVALHIMLSQLTFIFGIMI) threads the bilayer. Over 254-270 (SFHAGPISFFYDIINYC) the chain is Extracellular. Residues 271 to 291 (VALPKANSTSILVFLTVVVAL) traverse the membrane as a helical segment. Topologically, residues 292–307 (RINKCIRISFNQYPIE) are cytoplasmic. Residues 308-328 (FPMELFLIIGFTVIANKISMA) form a helical membrane-spanning segment. The Extracellular portion of the chain corresponds to 329-355 (TETSQTLIDMIPYSFLLPVTPDFSLLP). A helical transmembrane segment spans residues 356 to 376 (KIILQAFSLSLVSSFLLIFLG). Over 377 to 392 (KKIASLHNYSVNSNQD) the chain is Cytoplasmic. A helical membrane pass occupies residues 393–413 (LIAIGLCNVVSSFFRSCVFTG). The Extracellular portion of the chain corresponds to 414–429 (AIARTIIQDKSGGRQQ). The chain crosses the membrane as a helical span at residues 430–450 (FASLVGAGVMLLLMVKMGHFF). At 451–452 (YT) the chain is on the cytoplasmic side. A helical transmembrane segment spans residues 453-473 (LPNAVLAGIILSNVIPYLETI). The Extracellular segment spans residues 474–497 (SNLPSLWRQDQYDCALWMMTFSSS). A helical transmembrane segment spans residues 498–518 (IFLGLDIGLIISVVSAFFITT). Residues 519–970 (VRSHRAKILL…SPEGNSNEDV (452 aa)) lie on the Cytoplasmic side of the membrane. The region spanning 543-795 (DYREIITIPG…LSVHDAVLFA (253 aa)) is the STAS domain. The interval 664–970 (TVSSVSQKNQ…SPEGNSNEDV (307 aa)) is interaction with RACGAP1. Over residues 858-868 (SELDLELESEQ) the composition is skewed to acidic residues. The tract at residues 858–970 (SELDLELESE…SPEGNSNEDV (113 aa)) is disordered. Over residues 877–898 (DLDRELEPEMEPKAETETKTQT) the composition is skewed to basic and acidic residues. The span at 938–948 (STQSQTQTRTW) shows a compositional bias: low complexity.

Belongs to the SLC26A/SulP transporter (TC 2.A.53) family. In terms of assembly, interacts with RACGAP1. Interacts with CFTR; stimulates anion transport activity of CFTR. Post-translationally, N-glycosylated. As to expression, expression observed exclusively in testis, restricted to the meiotic phase of the germ cell. Abundant expression located in the seminiferous tubules, concentrated on the luminal side of the tubuli harboring the spermatocytes and spermatids.

The protein resides in the membrane. It carries out the reaction sulfate(out) + chloride(in) = sulfate(in) + chloride(out). It catalyses the reaction oxalate(in) + chloride(out) = oxalate(out) + chloride(in). With respect to regulation, activity is inhibited by 4,4'-Di-isothiocyanatostilbene-2,2'-disulfonic acid (DIDS - an inhibitor of several anion channels and transporters) and gluconate. Its function is as follows. Antiporter that mediates the exchange of sulfate and oxalate against chloride ions across a membrane. Stimulates anion transport activity of CFTR. May cooperate with CFTR in the regulation of chloride and bicarbonate ions fluxes required for activation of the ADCY10/PKA pathway during sperm motility and sperm capacitation. May play a role in sperm tail differentiation and motility and hence male fertility. The protein is Testis anion transporter 1 of Homo sapiens (Human).